Reading from the N-terminus, the 181-residue chain is Translation initiation factor IF-3 (181 aa).

The protein belongs to the IF-3 family. As to quaternary structure, monomer.

Its subcellular location is the cytoplasm. Its function is as follows. IF-3 binds to the 30S ribosomal subunit and shifts the equilibrium between 70S ribosomes and their 50S and 30S subunits in favor of the free subunits, thus enhancing the availability of 30S subunits on which protein synthesis initiation begins. This Cereibacter sphaeroides (strain ATCC 17023 / DSM 158 / JCM 6121 / CCUG 31486 / LMG 2827 / NBRC 12203 / NCIMB 8253 / ATH 2.4.1.) (Rhodobacter sphaeroides) protein is Translation initiation factor IF-3.